We begin with the raw amino-acid sequence, 368 residues long: Peptide chain release factor 2 (368 aa).

Glutamine 251 is modified (N5-methylglutamine).

This sequence belongs to the prokaryotic/mitochondrial release factor family. Post-translationally, methylated by PrmC. Methylation increases the termination efficiency of RF2.

It is found in the cytoplasm. Its function is as follows. Peptide chain release factor 2 directs the termination of translation in response to the peptide chain termination codons UGA and UAA. The chain is Peptide chain release factor 2 from Streptomyces avermitilis (strain ATCC 31267 / DSM 46492 / JCM 5070 / NBRC 14893 / NCIMB 12804 / NRRL 8165 / MA-4680).